Here is a 165-residue protein sequence, read N- to C-terminus: MQGRYSAPLFLLLWLFFLHGTLCEQVLQTFTGEIGAGNYTYFTLNREGEITLILESTEGDADLYISQNVAKPDYENYDLQSSTCGQDVVTIPVEFKRPIGIGVLGHANSPLSKYTMTVVVDYGTGMAEDKNRWYSASEEGGEPQEESLIWMIFVGILKIIFEILL.

The N-terminal stretch at 1–23 (MQGRYSAPLFLLLWLFFLHGTLC) is a signal peptide. N-linked (GlcNAc...) asparagine glycosylation occurs at Asn38.

The protein belongs to the UPF0669 family.

Its subcellular location is the secreted. The chain is UPF0669 protein v1g209471 from Nematostella vectensis (Starlet sea anemone).